A 449-amino-acid polypeptide reads, in one-letter code: UNC93-like protein MFSD11 (449 aa).

A helical membrane pass occupies residues 8-28 (LFNIIILGVAFMFMFTAFQTC). N40 carries an N-linked (GlcNAc...) asparagine glycan. Transmembrane regions (helical) follow at residues 53–73 (AIIYGVFSASNLITPSVVAIV), 74–94 (GPQLSMFASGLFYSMYIAVFI), 96–116 (PFPWSFYTASVFIGIAAAVLW), 138–158 (IFWALLQSSLFFGNLYIYFAW), and 170–190 (RTVFIALTVISLVGTVLFFLI). S204 is modified (phosphoserine). The next 6 helical transmembrane spans lie at 239 to 259 (MLLLSITTAYTGLELTFFSGV), 277 to 297 (LIGLSGIFIGIGEILGGSLFG), 309 to 329 (PVVLLGILVHFIAFYLIFLNM), 359 to 379 (FLLGLGDSCFNTQLLSILGFL), 385 to 405 (APAFAIFKFVQSICAAVAFFY), and 410 to 430 (LLHWQLLVMVIFGFFGTISFF).

This sequence belongs to the unc-93 family.

It is found in the membrane. This chain is UNC93-like protein MFSD11 (MFSD11), found in Homo sapiens (Human).